We begin with the raw amino-acid sequence, 558 residues long: Sinalpyl alcohol oxidase Nec3 (558 aa).

An N-terminal signal peptide occupies residues 1–28 (MATMAILQRTFSFILIFSIALHLKSLFA). An FAD-binding site is contributed by 64–65 (TA). A glycan (N-linked (GlcNAc...) asparagine) is linked at Asn76. FAD contacts are provided by residues 83 to 84 (ER), Val131, Ser135, and 139 to 142 (NFGF). N-linked (GlcNAc...) asparagine glycosylation occurs at Asn180. Val247 contacts FAD. N-linked (GlcNAc...) asparagine glycosylation is found at Asn308, Asn386, and Asn473. Cysteines 433 and 484 form a disulfide. 492-493 (YH) contacts FAD. The Proton donor role is filled by His493. The active-site Proton acceptor is the Asn531. 532–533 (PQ) lines the FAD pocket.

This sequence belongs to the GMC oxidoreductase family. In terms of assembly, monomer. FAD serves as cofactor. Confined to nectaries.

The enzyme catalyses (E)-sinapyl alcohol + O2 = (E)-sinapaldehyde + H2O2. It participates in alkaloid biosynthesis. Functionally, involved in the production of blood-red nectar containing the alkaloid nesocodin and that serves as a visual attractant for pollinator visitation, including vertebrates such as Phelsuma geckos. The nectar is initially acidic and pale yellow, but slowly becomes alkaline before turning into red within 24 hours. Together with NEC1 and NEC2, facilitates the condensation of sinapaldehyde ((E)-3,5-dimethoxy-4-hydroxycinnamaldehyde) and proline to form nesocodin, a pigment with a stable imine bond. Catalyzes the conversion of sinapyl alcohol to sinapaldehyde. The polypeptide is Sinalpyl alcohol oxidase Nec3 (Nesocodon mauritianus (Blue Mauritius bellflower)).